The following is a 36-amino-acid chain: Toxin Bcg III 29.21 (36 aa).

Residues cysteine 6 and cysteine 31 are joined by a disulfide bond.

It is found in the secreted. Its subcellular location is the nematocyst. This chain is Toxin Bcg III 29.21, found in Bunodosoma cangicum (Sea anemone).